Here is a 285-residue protein sequence, read N- to C-terminus: HTH-type transcriptional regulator HexR (285 aa).

The 77-residue stretch at 2–78 (KNLLEQIQSR…IQLAQSLASG (77 aa)) folds into the HTH rpiR-type domain. Residues 38–57 (IAALAQAAAVSEPTVNRFCR) constitute a DNA-binding region (H-T-H motif). Residues 122 to 261 (AVDLLIQARQ…ATGVTLRRGV (140 aa)) enclose the SIS domain.

Involved in regulation of glucose metabolism. Transcriptional repressor of the gap-1 gene and of the edd-glk-gltR-2 and zwf-pgl-eda operons. Acts by binding directly to an inverted pseudopalindromic sequence in the promoter region. The protein is HTH-type transcriptional regulator HexR of Pseudomonas aeruginosa (strain ATCC 15692 / DSM 22644 / CIP 104116 / JCM 14847 / LMG 12228 / 1C / PRS 101 / PAO1).